A 312-amino-acid polypeptide reads, in one-letter code: Ribosomal RNA small subunit methyltransferase H (312 aa).

Residues 33 to 35 (GGY), aspartate 51, phenylalanine 78, aspartate 97, and glutamine 104 each bind S-adenosyl-L-methionine.

This sequence belongs to the methyltransferase superfamily. RsmH family.

Its subcellular location is the cytoplasm. The enzyme catalyses cytidine(1402) in 16S rRNA + S-adenosyl-L-methionine = N(4)-methylcytidine(1402) in 16S rRNA + S-adenosyl-L-homocysteine + H(+). Specifically methylates the N4 position of cytidine in position 1402 (C1402) of 16S rRNA. This Orientia tsutsugamushi (strain Boryong) (Rickettsia tsutsugamushi) protein is Ribosomal RNA small subunit methyltransferase H.